The primary structure comprises 180 residues: Large ribosomal subunit protein uL5 (180 aa).

It belongs to the universal ribosomal protein uL5 family. As to quaternary structure, part of the 50S ribosomal subunit; part of the 5S rRNA/L5/L18/L25 subcomplex. Contacts the 5S rRNA and the P site tRNA. Forms a bridge to the 30S subunit in the 70S ribosome.

In terms of biological role, this is one of the proteins that bind and probably mediate the attachment of the 5S RNA into the large ribosomal subunit, where it forms part of the central protuberance. In the 70S ribosome it contacts protein S13 of the 30S subunit (bridge B1b), connecting the 2 subunits; this bridge is implicated in subunit movement. Contacts the P site tRNA; the 5S rRNA and some of its associated proteins might help stabilize positioning of ribosome-bound tRNAs. This is Large ribosomal subunit protein uL5 from Lactobacillus helveticus (strain DPC 4571).